The sequence spans 66 residues: Small ribosomal subunit protein eS30 (66 aa).

Positions 1-35 (MGKVHGGLNRAGKVRNATPKKDKEEKRKPKVGRAK) are disordered.

Belongs to the eukaryotic ribosomal protein eS30 family.

This Dictyostelium discoideum (Social amoeba) protein is Small ribosomal subunit protein eS30 (rps30-1).